The sequence spans 224 residues: Flagellar L-ring protein (224 aa).

The first 15 residues, methionine 1–alanine 15, serve as a signal peptide directing secretion. Cysteine 16 carries N-palmitoyl cysteine lipidation. Residue cysteine 16 is the site of S-diacylglycerol cysteine attachment.

It belongs to the FlgH family. As to quaternary structure, the basal body constitutes a major portion of the flagellar organelle and consists of four rings (L,P,S, and M) mounted on a central rod.

The protein localises to the cell outer membrane. It is found in the bacterial flagellum basal body. In terms of biological role, assembles around the rod to form the L-ring and probably protects the motor/basal body from shearing forces during rotation. This Shewanella sp. (strain MR-7) protein is Flagellar L-ring protein.